Here is a 283-residue protein sequence, read N- to C-terminus: 5'-nucleotidase SurE (283 aa).

The a divalent metal cation site is built by aspartate 14, aspartate 15, serine 47, and asparagine 105.

It belongs to the SurE nucleotidase family. It depends on a divalent metal cation as a cofactor.

Its subcellular location is the cytoplasm. The enzyme catalyses a ribonucleoside 5'-phosphate + H2O = a ribonucleoside + phosphate. Functionally, nucleotidase that shows phosphatase activity on nucleoside 5'-monophosphates. This is 5'-nucleotidase SurE from Chlamydia muridarum (strain MoPn / Nigg).